A 179-amino-acid chain; its full sequence is Large ribosomal subunit protein uL5 (179 aa).

The protein belongs to the universal ribosomal protein uL5 family. In terms of assembly, part of the 50S ribosomal subunit; part of the 5S rRNA/L5/L18/L25 subcomplex. Contacts the 5S rRNA and the P site tRNA. Forms a bridge to the 30S subunit in the 70S ribosome.

In terms of biological role, this is one of the proteins that bind and probably mediate the attachment of the 5S RNA into the large ribosomal subunit, where it forms part of the central protuberance. In the 70S ribosome it contacts protein S13 of the 30S subunit (bridge B1b), connecting the 2 subunits; this bridge is implicated in subunit movement. Contacts the P site tRNA; the 5S rRNA and some of its associated proteins might help stabilize positioning of ribosome-bound tRNAs. The polypeptide is Large ribosomal subunit protein uL5 (Anoxybacillus flavithermus (strain DSM 21510 / WK1)).